The primary structure comprises 51 residues: Sperm protamine P1 (51 aa).

This sequence belongs to the protamine P1 family. As to expression, testis.

It localises to the nucleus. Its subcellular location is the chromosome. Functionally, protamines substitute for histones in the chromatin of sperm during the haploid phase of spermatogenesis. They compact sperm DNA into a highly condensed, stable and inactive complex. This chain is Sperm protamine P1 (PRM1), found in Colobus guereza (Mantled guereza).